The primary structure comprises 208 residues: Outer-membrane lipoprotein carrier protein (208 aa).

Positions 1-22 (MKKRLCAVLLASPLLFSAAVFA) are cleaved as a signal peptide.

This sequence belongs to the LolA family. As to quaternary structure, monomer.

The protein localises to the periplasm. In terms of biological role, participates in the translocation of lipoproteins from the inner membrane to the outer membrane. Only forms a complex with a lipoprotein if the residue after the N-terminal Cys is not an aspartate (The Asp acts as a targeting signal to indicate that the lipoprotein should stay in the inner membrane). This chain is Outer-membrane lipoprotein carrier protein, found in Shewanella baltica (strain OS195).